The sequence spans 337 residues: Vegetative-specific protein H5 (337 aa).

An Involved in the stabilization of the negatively charged intermediate by the formation of the oxyanion hole motif is present at residues 88-90 (HGG). Residues S161, D261, and H291 contribute to the active site.

It belongs to the 'GDXG' lipolytic enzyme family.

This is Vegetative-specific protein H5 (cinB) from Dictyostelium discoideum (Social amoeba).